A 185-amino-acid polypeptide reads, in one-letter code: uncharacterized protein (185 aa).

The disordered stretch occupies residues 160–185 (QYTGPAVPSVPTTNLNDIGDPTKTVQ).

This is an uncharacterized protein from Saccharomyces cerevisiae (strain ATCC 204508 / S288c) (Baker's yeast).